Reading from the N-terminus, the 69-residue chain is Putative membrane protein insertion efficiency factor (69 aa).

This sequence belongs to the UPF0161 family.

Its subcellular location is the cell membrane. Could be involved in insertion of integral membrane proteins into the membrane. This Alkaliphilus metalliredigens (strain QYMF) protein is Putative membrane protein insertion efficiency factor.